Here is an 83-residue protein sequence, read N- to C-terminus: Short neurotoxin VAN-29 (83 aa).

Residues 1 to 21 (MKTLLLTLVVVTIVCLDLGYT) form the signal peptide. 4 disulfide bridges follow: C24–C45, C38–C62, C64–C75, and C76–C81.

This sequence belongs to the three-finger toxin family. Short-chain subfamily. Type I alpha-neurotoxin sub-subfamily. As to expression, expressed by the venom gland.

The protein resides in the secreted. Functionally, binds to muscle nicotinic acetylcholine receptor (nAChR) and inhibit acetylcholine from binding to the receptor, thereby impairing neuromuscular transmission. The protein is Short neurotoxin VAN-29 of Laticauda laticaudata (Blue-ringed sea krait).